The chain runs to 235 residues: Vacuolar protein sorting-associated protein 60.2 (235 aa).

The segment at 1–30 (MKRIFGAKNNKEPPPSIQDASDRINKRGDS) is disordered. Over residues 20 to 30 (ASDRINKRGDS) the composition is skewed to basic and acidic residues. Positions 99–148 (LKDAQQTMTALKSANKELKGMMKTVKIQDIDNLQDDMMDLMDESSEIQET) form a coiled coil. Residues 174–235 (DMGNETEADG…PAVPRASLRG (62 aa)) are disordered.

This sequence belongs to the SNF7 family.

The protein localises to the endosome. It is found in the multivesicular body membrane. Functionally, probable peripherally associated component of the endosomal sorting required for transport complex III (ESCRT-III) which is involved in multivesicular bodies (MVBs) formation and sorting of endosomal cargo proteins into MVBs. The sequence is that of Vacuolar protein sorting-associated protein 60.2 from Arabidopsis thaliana (Mouse-ear cress).